A 155-amino-acid chain; its full sequence is 2-C-methyl-D-erythritol 2,4-cyclodiphosphate synthase (155 aa).

Asp-8 and His-10 together coordinate a divalent metal cation. 4-CDP-2-C-methyl-D-erythritol 2-phosphate is bound by residues 8-10 (DVH) and 34-35 (HS). His-42 lines the a divalent metal cation pocket. 4-CDP-2-C-methyl-D-erythritol 2-phosphate is bound by residues 56–58 (DIG), 61–65 (FPDSD), 100–106 (AQKPKML), 132–135 (TTEE), Phe-139, and Lys-142.

This sequence belongs to the IspF family. In terms of assembly, homotrimer. Requires a divalent metal cation as cofactor.

It catalyses the reaction 4-CDP-2-C-methyl-D-erythritol 2-phosphate = 2-C-methyl-D-erythritol 2,4-cyclic diphosphate + CMP. Its pathway is isoprenoid biosynthesis; isopentenyl diphosphate biosynthesis via DXP pathway; isopentenyl diphosphate from 1-deoxy-D-xylulose 5-phosphate: step 4/6. Involved in the biosynthesis of isopentenyl diphosphate (IPP) and dimethylallyl diphosphate (DMAPP), two major building blocks of isoprenoid compounds. Catalyzes the conversion of 4-diphosphocytidyl-2-C-methyl-D-erythritol 2-phosphate (CDP-ME2P) to 2-C-methyl-D-erythritol 2,4-cyclodiphosphate (ME-CPP) with a corresponding release of cytidine 5-monophosphate (CMP). The chain is 2-C-methyl-D-erythritol 2,4-cyclodiphosphate synthase from Clostridium botulinum (strain Kyoto / Type A2).